Consider the following 329-residue polypeptide: BTB/POZ domain-containing adapter for CUL3-mediated RhoA degradation protein 1 (329 aa).

Residues 1–22 are compositionally biased toward low complexity; the sequence is MSAEASGPAAAAAPSLEAPKPS. Residues 1-31 are disordered; sequence MSAEASGPAAAAAPSLEAPKPSGLEPGPAAY. The BTB domain maps to 41-109; that stretch reads KYVKLNVGGS…LRDGSVPLPE (69 aa). A disordered region spans residues 282-303; the sequence is ATGGAAGAGGAGRGEDEENREH.

This sequence belongs to the BACURD family. As to quaternary structure, homotetramer; forms a two-fold symmetric tetramer in solution. Interacts with CUL3; interaction is direct and forms a 5:5 heterodecamer. Component of the BCR(KCTD13) E3 ubiquitin ligase complex, at least composed of CUL3, KCTD13/BACURD1 and RBX1. Interacts with RHOA; with a preference for RhoA-GDP. Interacts with POLD2 and PCNA. Interacts with SPRTN. Expressed in a wide variety of tissues.

The protein localises to the nucleus. It functions in the pathway protein modification; protein ubiquitination. In terms of biological role, substrate-specific adapter of a BCR (BTB-CUL3-RBX1) E3 ubiquitin-protein ligase complex required for synaptic transmission. The BCR(KCTD13) E3 ubiquitin ligase complex mediates the ubiquitination of RHOA, leading to its degradation by the proteasome Degradation of RHOA regulates the actin cytoskeleton and promotes synaptic transmission. This chain is BTB/POZ domain-containing adapter for CUL3-mediated RhoA degradation protein 1 (KCTD13), found in Homo sapiens (Human).